The sequence spans 82 residues: MIHSSVKRWGNSPAVRIPATLMQALNLNIDDEVKIDLVDGKLIIEPVRKEPVFTLAELVNDITPENLHENIDWGEPKDKEVW.

Residues 4 to 49 (SSVKRWGNSPAVRIPATLMQALNLNIDDEVKIDLVDGKLIIEPVRK) enclose the SpoVT-AbrB domain.

The protein belongs to the PemI family. As to quaternary structure, forms a heterohexamer composed of alternating toxin and antitoxin homodimers MazF(2)-MazE(2)-MazF(2) which inhibits the endoribonuclease activity of MazF.

In terms of biological role, antitoxin component of a type II toxin-antitoxin (TA) system. Labile antitoxin that binds to its cognate MazF endoribonuclease toxin and neutralizes its activity. Both MazE and MazE-MazF bind to the promoter region of the mazE-mazF operon to inhibit their transcription. The chain is Antitoxin MazE (mazE) from Escherichia coli O157:H7.